The chain runs to 427 residues: Adenylosuccinate synthetase (427 aa).

GTP is bound by residues 12–18 (GDEGKGK) and 40–42 (GHT). Asp13 functions as the Proton acceptor in the catalytic mechanism. Residues Asp13 and Gly40 each contribute to the Mg(2+) site. IMP is bound by residues 13–16 (DEGK), 38–41 (NAGH), Thr128, Arg142, Gln223, Thr238, and Arg302. His41 acts as the Proton donor in catalysis. 298–304 (TTTGRPR) provides a ligand contact to substrate. GTP is bound by residues Arg304, 330–332 (KLD), and 412–414 (AVG).

The protein belongs to the adenylosuccinate synthetase family. Homodimer. Requires Mg(2+) as cofactor.

It localises to the cytoplasm. The catalysed reaction is IMP + L-aspartate + GTP = N(6)-(1,2-dicarboxyethyl)-AMP + GDP + phosphate + 2 H(+). It functions in the pathway purine metabolism; AMP biosynthesis via de novo pathway; AMP from IMP: step 1/2. Its function is as follows. Plays an important role in the de novo pathway of purine nucleotide biosynthesis. Catalyzes the first committed step in the biosynthesis of AMP from IMP. The sequence is that of Adenylosuccinate synthetase from Heliobacterium modesticaldum (strain ATCC 51547 / Ice1).